We begin with the raw amino-acid sequence, 306 residues long: Ethylmalonyl-CoA decarboxylase (306 aa).

Lys-216 carries the post-translational modification N6-acetyllysine; alternate. Lys-216 carries the post-translational modification N6-succinyllysine; alternate.

The protein belongs to the enoyl-CoA hydratase/isomerase family.

The protein resides in the cytoplasm. The protein localises to the cytosol. It catalyses the reaction (2S)-ethylmalonyl-CoA + H(+) = butanoyl-CoA + CO2. The enzyme catalyses (S)-methylmalonyl-CoA + H(+) = propanoyl-CoA + CO2. It carries out the reaction (2R)-ethylmalonyl-CoA + H(+) = butanoyl-CoA + CO2. In terms of biological role, decarboxylates ethylmalonyl-CoA, a potentially toxic metabolite, to form butyryl-CoA, suggesting it might be involved in metabolite proofreading. Acts preferentially on (S)-ethylmalonyl-CoA but also has some activity on the (R)-isomer. Also has methylmalonyl-CoA decarboxylase activity at lower level. The polypeptide is Ethylmalonyl-CoA decarboxylase (ECHDC1) (Bos taurus (Bovine)).